We begin with the raw amino-acid sequence, 330 residues long: Protein ANTHESIS POMOTING FACTOR 1 (330 aa).

6 WD repeats span residues Asp22–Ile61, Gly112–Ile151, His153–Phe191, Gly198–Gly237, Pro242–Arg281, and Asn284–Asp323.

Belongs to the WD repeat SWD2 family. As to expression, expressed in the shoot apical meristem (SAM), embryos, seedlings, cotyledons, leaves primordia, young leaves and roots.

Its subcellular location is the nucleus. Component of a chromatin regulatory complex involved in regulating chromatin structure in the nucleus. Promotes flowering under long days (LD) via the regulation of bolting. This Arabidopsis thaliana (Mouse-ear cress) protein is Protein ANTHESIS POMOTING FACTOR 1.